The following is a 116-amino-acid chain: MTNKIIQQIEAEQMNKEIPAFAPGDTVIVQVKVKEGDRQRLQAFEGVVIAKRNRGLNSAFTVRKISNGVGVERTFQTYSPIVDSLSVKRRGDVRKAKLYYLRALSGKAARIKEKLV.

Belongs to the bacterial ribosomal protein bL19 family.

Its function is as follows. This protein is located at the 30S-50S ribosomal subunit interface and may play a role in the structure and function of the aminoacyl-tRNA binding site. This is Large ribosomal subunit protein bL19 from Pseudomonas aeruginosa (strain LESB58).